The primary structure comprises 353 residues: 3-dehydroquinate synthase (353 aa).

NAD(+)-binding positions include 60 to 65, 94 to 98, 118 to 119, Lys131, and Lys140; these read AGDMNK, GMITD, and TT. The Zn(2+) site is built by Glu173, His234, and His253.

Belongs to the sugar phosphate cyclases superfamily. Dehydroquinate synthase family. NAD(+) serves as cofactor. It depends on Co(2+) as a cofactor. Zn(2+) is required as a cofactor.

The protein localises to the cytoplasm. The catalysed reaction is 7-phospho-2-dehydro-3-deoxy-D-arabino-heptonate = 3-dehydroquinate + phosphate. It functions in the pathway metabolic intermediate biosynthesis; chorismate biosynthesis; chorismate from D-erythrose 4-phosphate and phosphoenolpyruvate: step 2/7. Functionally, catalyzes the conversion of 3-deoxy-D-arabino-heptulosonate 7-phosphate (DAHP) to dehydroquinate (DHQ). This Parabacteroides distasonis (strain ATCC 8503 / DSM 20701 / CIP 104284 / JCM 5825 / NCTC 11152) protein is 3-dehydroquinate synthase.